The following is a 263-amino-acid chain: 3-deoxy-manno-octulosonate cytidylyltransferase 1 (263 aa).

The protein belongs to the KdsB family.

Its subcellular location is the cytoplasm. It carries out the reaction 3-deoxy-alpha-D-manno-oct-2-ulosonate + CTP = CMP-3-deoxy-beta-D-manno-octulosonate + diphosphate. It functions in the pathway nucleotide-sugar biosynthesis; CMP-3-deoxy-D-manno-octulosonate biosynthesis; CMP-3-deoxy-D-manno-octulosonate from 3-deoxy-D-manno-octulosonate and CTP: step 1/1. Its pathway is bacterial outer membrane biogenesis; lipopolysaccharide biosynthesis. Activates KDO (a required 8-carbon sugar) for incorporation into bacterial lipopolysaccharide in Gram-negative bacteria. The sequence is that of 3-deoxy-manno-octulosonate cytidylyltransferase 1 from Burkholderia ambifaria (strain MC40-6).